The following is an 85-amino-acid chain: Small ribosomal subunit protein bS16c (85 aa).

Belongs to the bacterial ribosomal protein bS16 family.

Its subcellular location is the plastid. It localises to the chloroplast. The protein is Small ribosomal subunit protein bS16c of Nicotiana tabacum (Common tobacco).